The primary structure comprises 73 residues: Omega-conotoxin GVIA (73 aa).

A signal peptide spans methionine 1–alanine 22. The propeptide occupies aspartate 23–arginine 45. Cystine bridges form between cysteine 46–cysteine 61, cysteine 53–cysteine 64, and cysteine 60–cysteine 71. 4-hydroxyproline is present on residues proline 49, proline 55, and proline 66. Tyrosine amide; in form omega-conotoxin GVIA is present on tyrosine 72.

The protein belongs to the conotoxin O1 superfamily. Expressed by the venom duct.

The protein localises to the secreted. Its function is as follows. Omega-conotoxins act at presynaptic membranes, they bind and block voltage-gated calcium channels (Cav). This toxin blocks N-type calcium channels (Cav2.2/CACNA1B) with a high potency (it displaces [125I]GVIA with an IC(50)=3.7-38 pM). This Conus geographus (Geography cone) protein is Omega-conotoxin GVIA.